Here is a 421-residue protein sequence, read N- to C-terminus: Protein OS-9 homolog (421 aa).

The signal sequence occupies residues 1-26; the sequence is MWRWSTGVRTMLGYAMCFLALGSALT. The region spanning 99–220 is the MRH domain; the sequence is EEATVGKKLE…LVSIPSLCEL (122 aa). W115 contributes to the a mannooligosaccharide derivative binding site. N125 is a glycosylation site (N-linked (GlcNAc...) asparagine). Intrachain disulfides connect C173–C206 and C188–C218. The a mannooligosaccharide derivative site is built by R180, E202, and Y208. N-linked (GlcNAc...) asparagine glycosylation is found at N271 and N332. Positions 375 to 394 are enriched in acidic residues; the sequence is GNSEDYEQQAPEQLDEEEAE. The disordered stretch occupies residues 375–403; it reads GNSEDYEQQAPEQLDEEEAELTSQSDDPA.

Belongs to the OS-9 family. Interacts with missfolded ER lumenal proteins.

It localises to the endoplasmic reticulum membrane. In terms of biological role, lectin involved in the quality control of the secretory pathway. As a member of the endoplasmic reticulum-associated degradation lumenal (ERAD-L) surveillance system, targets misfolded endoplasmic reticulum lumenal glycoproteins for degradation. The polypeptide is Protein OS-9 homolog (YOS9) (Eremothecium gossypii (strain ATCC 10895 / CBS 109.51 / FGSC 9923 / NRRL Y-1056) (Yeast)).